Consider the following 413-residue polypeptide: Eukaryotic initiation factor 4A-8 (413 aa).

A Q motif motif is present at residues 40 to 68 (DSFDAMGLQENLLRGIYAYGFEKPSAIQQ). Positions 71-241 (IVPFCKGLDV…RKFMNKPVRI (171 aa)) constitute a Helicase ATP-binding domain. Residue 84-91 (AQSGTGKT) participates in ATP binding. Positions 189 to 192 (DEAD) match the DEAD box motif. The Helicase C-terminal domain maps to 252–413 (GIKQFYVNVD…ELPSNVADLL (162 aa)).

Belongs to the DEAD box helicase family. eIF4A subfamily. EIF4F is a multi-subunit complex, the composition of which varies with external and internal environmental conditions. It is composed of at least EIF4A, EIF4E and EIF4G. Pollen specific.

It catalyses the reaction ATP + H2O = ADP + phosphate + H(+). ATP-dependent RNA helicase which is a subunit of the eIF4F complex involved in cap recognition and is required for mRNA binding to ribosome. In the current model of translation initiation, eIF4A unwinds RNA secondary structures in the 5'-UTR of mRNAs which is necessary to allow efficient binding of the small ribosomal subunit, and subsequent scanning for the initiator codon. The chain is Eukaryotic initiation factor 4A-8 from Nicotiana tabacum (Common tobacco).